Consider the following 286-residue polypeptide: Probable aquaporin PIP-type pTOM75 (286 aa).

The tract at residues 1–35 (MAENKEEDVKLGANKFRETQPLGTAAQTDKDYKEP) is disordered. Over 1-55 (MAENKEEDVKLGANKFRETQPLGTAAQTDKDYKEPPPAPLFEPGELSSWSFYRAG) the chain is Cytoplasmic. A compositionally biased stretch (basic and acidic residues) spans 7–18 (EDVKLGANKFRE). Residues 56–76 (IAEFMATFLFLYITILTVMGL) traverse the membrane as a helical segment. The Extracellular portion of the chain corresponds to 77–89 (KRSDSLCSSVGIQ). The chain crosses the membrane as a helical span at residues 90 to 110 (GVAWAFGGMIFALVYCTAGIS). Over 111 to 133 (GGHINPAVTFGLFLARKLSLTRA) the chain is Cytoplasmic. An NPA 1 motif is present at residues 115 to 117 (NPA). Residues 134-154 (VFYMVMQCLGAICGAGVVKGF) traverse the membrane as a helical segment. The Extracellular portion of the chain corresponds to 155 to 175 (MVGPYQRLGGGANVVNPGYTK). A helical membrane pass occupies residues 176–196 (GDGLGAEIIGTFVLVYTVFSA). Topologically, residues 197–209 (TDAKRNARDSHVP) are cytoplasmic. A helical transmembrane segment spans residues 210–230 (ILAPLPIGFAVFLVHLATIPI). The Extracellular segment spans residues 231-257 (TGTGINPARSLGAAIIYNDEHAWNDHW). The NPA 2 signature appears at 236–238 (NPA). A helical transmembrane segment spans residues 258-278 (IFWVGPMIGAALAAIYHQIII). Residues 279–286 (RAMPFHRS) are Cytoplasmic-facing.

This sequence belongs to the MIP/aquaporin (TC 1.A.8) family. PIP (TC 1.A.8.11) subfamily. As to expression, roots, ripening fruit and senescing leaves.

Its subcellular location is the cell membrane. In terms of biological role, aquaporins facilitate the transport of water and small neutral solutes across cell membranes. The protein is Probable aquaporin PIP-type pTOM75 of Solanum lycopersicum (Tomato).